We begin with the raw amino-acid sequence, 102 residues long: Small ribosomal subunit protein uS10 (102 aa).

Belongs to the universal ribosomal protein uS10 family. Part of the 30S ribosomal subunit.

Functionally, involved in the binding of tRNA to the ribosomes. The protein is Small ribosomal subunit protein uS10 of Clavibacter michiganensis subsp. michiganensis (strain NCPPB 382).